We begin with the raw amino-acid sequence, 320 residues long: MKPSVILYKKIADDLRARLDQHFTVTELDAFPSLDHPALATAEGIIGSGGKVDKDFLQHAPRLRAASTISVGYDTFNVDALNEKGVILMHTPTVLTETVADTVLALMLASARRVVEVAERVKAGEWKGGVDSDWFGTDVHHKTIGILGMGRIGLAVAQRAHFGFSMPVLYNARRHHAEAEQRFNARHCDLDTLLAESDFLCITLPLTTETHHLIGREQLAKMKPSAILINIGRGAVVDEDALTEALVKGTIQGAGLDVFVKEPLPVDSPLLDLPNVVALPHIGSATHETRYDMAACAVDNLIAALSGEVKENCVNPQVLK.

Residues Arg-233 and Glu-262 contribute to the active site. The Proton donor role is filled by His-281.

The protein belongs to the D-isomer specific 2-hydroxyacid dehydrogenase family. GhrB subfamily. In terms of assembly, homodimer.

The protein localises to the cytoplasm. It catalyses the reaction glycolate + NADP(+) = glyoxylate + NADPH + H(+). It carries out the reaction (R)-glycerate + NAD(+) = 3-hydroxypyruvate + NADH + H(+). The enzyme catalyses (R)-glycerate + NADP(+) = 3-hydroxypyruvate + NADPH + H(+). Catalyzes the NADPH-dependent reduction of glyoxylate and hydroxypyruvate into glycolate and glycerate, respectively. The protein is Glyoxylate/hydroxypyruvate reductase B of Pectobacterium carotovorum subsp. carotovorum (strain PC1).